We begin with the raw amino-acid sequence, 165 residues long: Phosphopantetheine adenylyltransferase (165 aa).

Thr9 lines the substrate pocket. Residues 9-10 (TF) and His17 contribute to the ATP site. Residues Lys41, Leu73, and Arg87 each contribute to the substrate site. Residues 88 to 90 (GLR), Glu98, and 123 to 129 (YQFISGT) contribute to the ATP site.

The protein belongs to the bacterial CoaD family. Homohexamer. The cofactor is Mg(2+).

It is found in the cytoplasm. The enzyme catalyses (R)-4'-phosphopantetheine + ATP + H(+) = 3'-dephospho-CoA + diphosphate. It participates in cofactor biosynthesis; coenzyme A biosynthesis; CoA from (R)-pantothenate: step 4/5. Reversibly transfers an adenylyl group from ATP to 4'-phosphopantetheine, yielding dephospho-CoA (dPCoA) and pyrophosphate. The chain is Phosphopantetheine adenylyltransferase from Burkholderia vietnamiensis (strain G4 / LMG 22486) (Burkholderia cepacia (strain R1808)).